The chain runs to 37 residues: Large ribosomal subunit protein bL36 (37 aa).

The protein belongs to the bacterial ribosomal protein bL36 family.

In Streptomyces griseus subsp. griseus (strain JCM 4626 / CBS 651.72 / NBRC 13350 / KCC S-0626 / ISP 5235), this protein is Large ribosomal subunit protein bL36.